Consider the following 322-residue polypeptide: D-specific alpha-keto acid dehydrogenase (322 aa).

Residues 156–157 (QI), 229–231 (TGR), and Asp255 each bind NAD(+). Arg231 is a catalytic residue. Glu260 is a catalytic residue. Residue His292 is the Proton donor of the active site. NAD(+) is bound at residue 292-295 (HTAY).

Belongs to the D-isomer specific 2-hydroxyacid dehydrogenase family.

The enzyme catalyses a (2R)-2-hydroxycarboxylate + NADP(+) = a 2-oxocarboxylate + NADPH + H(+). The catalysed reaction is a (2R)-2-hydroxycarboxylate + NAD(+) = a 2-oxocarboxylate + NADH + H(+). It carries out the reaction (R)-lactate + NADP(+) = pyruvate + NADPH + H(+). It catalyses the reaction (R)-lactate + NAD(+) = pyruvate + NADH + H(+). The enzyme catalyses (2R)-hydroxybutanoate + NADP(+) = 2-oxobutanoate + NADPH + H(+). Functionally, required for high-level resistance to glycopeptide antibiotics. Catalyzes the reduction of 2-keto acids to 2-D-hydroxy acids, exhibiting highest catalytic efficiency with pyruvate and 2-oxobutanoate/alpha-ketobutyrate as substrates, producing D-lactate and (2R)-hydroxybutanoate, respectively. Together with D-alanine--D-lactate ligase VanA, gives rise to peptidoglycan precursors that terminate in the depsipeptide D-alanine-D-lactate rather than the dipeptide D-alanine-D-alanine thus preventing vancomycin binding. Shows a slight preference for NADPH over NADH as the electron donor. In Enterococcus faecium (Streptococcus faecium), this protein is D-specific alpha-keto acid dehydrogenase.